Reading from the N-terminus, the 257-residue chain is Snake venom serine protease Dav-KN (257 aa).

A signal peptide spans 1-18 (MVLIRVLANLLILQLSYA). The propeptide occupies 19-24 (QKSSEL). A Peptidase S1 domain is found at 25 to 248 (VIGGDECNIN…HLDWIKGIIA (224 aa)). 5 cysteine pairs are disulfide-bonded: Cys-31-Cys-162, Cys-49-Cys-65, Cys-97-Cys-255, Cys-173-Cys-188, and Cys-199-Cys-224. Active-site charge relay system residues include His-64 and Asp-109. Ser-203 (charge relay system) is an active-site residue.

This sequence belongs to the peptidase S1 family. Snake venom subfamily. Monomer. Expressed by the venom gland.

It is found in the secreted. Its function is as follows. Snake venom serine protease that may act in the hemostasis system of the prey. This Deinagkistrodon acutus (Hundred-pace snake) protein is Snake venom serine protease Dav-KN.